The sequence spans 601 residues: Chaperone protein DnaK (601 aa).

Position 175 is a phosphothreonine; by autocatalysis (Thr175). The segment at 570-601 is disordered; the sequence is FAQKAASKETSKNEQNEDGSIDAEIKEEDPKA. Positions 575 to 584 are enriched in basic and acidic residues; that stretch reads ASKETSKNEQ. The span at 585–601 shows a compositional bias: acidic residues; sequence NEDGSIDAEIKEEDPKA.

The protein belongs to the heat shock protein 70 family.

Acts as a chaperone. This Mycoplasma mobile (strain ATCC 43663 / 163K / NCTC 11711) (Mesomycoplasma mobile) protein is Chaperone protein DnaK.